The sequence spans 428 residues: Neuromedin-U receptor 1 (428 aa).

Topologically, residues 1 to 59 (MTPPCLNCSIFPGALSPNASRSPLVCNISEFKWPYQPEDLNLTDEALRLKYLGPQQMKQ) are extracellular. 2 N-linked (GlcNAc...) asparagine glycosylation sites follow: Asn27 and Asn41. A helical membrane pass occupies residues 60-80 (FVPICVTYLLIFVVGTLGNGL). Residues 81–96 (TCTVILRNKTMRTPTN) lie on the Cytoplasmic side of the membrane. A helical transmembrane segment spans residues 97-117 (FYLFSLAVSDMLVLLVGLPLE). Topologically, residues 118 to 137 (LYEMQQNYPFQLGASACYFR) are extracellular. Cysteines 134 and 219 form a disulfide. A helical transmembrane segment spans residues 138–158 (ILLLETVCLASVLNVTALSVE). The Cytoplasmic portion of the chain corresponds to 159–181 (RYVAVVRPLQAKSVMTRAHVRRM). Residues 182-202 (VGAIWVLATLFSLPNTSLHGL) traverse the membrane as a helical segment. At 203–235 (SQLTVPCRGPVPDSAICSLVGPMDFYKLVVLTT) the chain is on the extracellular side. The helical transmembrane segment at 236-256 (ALLFFCLPMVTISVLYLLIGL) threads the bilayer. The Cytoplasmic segment spans residues 257–294 (RLRRERMLLQVEVKGRKTAATQETSHRRIQLQDRGRRQ). The chain crosses the membrane as a helical span at residues 295–315 (VTKMLFALVVVFGICWAPFHA). Residues 316 to 339 (DRIMWSLVYGHSTEGLHLAYQCVH) are Extracellular-facing. A helical membrane pass occupies residues 340 to 360 (IASGIFFYLGSAANPVLYSLM). The Cytoplasmic portion of the chain corresponds to 361–428 (STRFRETFLQ…PGCQQETDPS (68 aa)).

It belongs to the G-protein coupled receptor 1 family. Ubiquitously expressed.

It localises to the cell membrane. In terms of biological role, receptor for the neuromedin-U and neuromedin-S neuropeptides. This is Neuromedin-U receptor 1 (Nmur1) from Mus musculus (Mouse).